Reading from the N-terminus, the 147-residue chain is D-aminoacyl-tRNA deacylase (147 aa).

Positions 136–137 (GP) match the Gly-cisPro motif, important for rejection of L-amino acids motif.

It belongs to the DTD family. Homodimer.

The protein localises to the cytoplasm. It catalyses the reaction glycyl-tRNA(Ala) + H2O = tRNA(Ala) + glycine + H(+). The catalysed reaction is a D-aminoacyl-tRNA + H2O = a tRNA + a D-alpha-amino acid + H(+). An aminoacyl-tRNA editing enzyme that deacylates mischarged D-aminoacyl-tRNAs. Also deacylates mischarged glycyl-tRNA(Ala), protecting cells against glycine mischarging by AlaRS. Acts via tRNA-based rather than protein-based catalysis; rejects L-amino acids rather than detecting D-amino acids in the active site. By recycling D-aminoacyl-tRNA to D-amino acids and free tRNA molecules, this enzyme counteracts the toxicity associated with the formation of D-aminoacyl-tRNA entities in vivo and helps enforce protein L-homochirality. The sequence is that of D-aminoacyl-tRNA deacylase from Sulfurihydrogenibium sp. (strain YO3AOP1).